We begin with the raw amino-acid sequence, 265 residues long: 5'-nucleotidase SurE (265 aa).

A divalent metal cation is bound by residues Asp-8, Asp-9, Ser-40, and Asn-98.

It belongs to the SurE nucleotidase family. The cofactor is a divalent metal cation.

It is found in the cytoplasm. It catalyses the reaction a ribonucleoside 5'-phosphate + H2O = a ribonucleoside + phosphate. In terms of biological role, nucleotidase that shows phosphatase activity on nucleoside 5'-monophosphates. This chain is 5'-nucleotidase SurE, found in Thermosynechococcus vestitus (strain NIES-2133 / IAM M-273 / BP-1).